Reading from the N-terminus, the 487-residue chain is 1-hydroxycarotenoid 3,4-desaturase (487 aa).

Residues glycine 12, glutamate 31, lysine 39, serine 55–leucine 56, valine 247, asparagine 275, leucine 431, glycine 461, and glycine 468–isoleucine 469 contribute to the FAD site.

This sequence belongs to the carotenoid/retinoid oxidoreductase family. As to quaternary structure, monomer.

The catalysed reaction is rhodopin + A = (3E)-3,4-didehydrorhodopin + AH2. It catalyses the reaction 1'-hydroxy-gamma-carotene + A = 1'-hydroxytorulene + AH2. The enzyme catalyses 1-hydroxy-all-trans-1,2-dihydro-neurosporene + A = demethylspheroidene + AH2. It carries out the reaction 1,1'-dihydroxy-1,1',2,2'-tetrahydroneurosporene + A = 1'-hydroxy-demethylspheroidene + AH2. The catalysed reaction is 1,1'-dihydroxy-1,1',2,2'-tetrahydrolycopene + A = 1,1'-dihydroxy-3,4-didehydro-1,2-dihydrolycopene + AH2. It participates in carotenoid biosynthesis. In terms of biological role, catalyzes the introduction of a C-3,4 double bond into 1'-hydroxy-gamma-carotene and rhodopin (1-hydroxylycopene) to yield 1'-hydroxytorulene and (3E)-3,4-didehydrorhodopin, respectively. Can also use 1-hydroxy-all-trans-1,2-dihydro-neurosporene, 1,1'-dihydroxy-1,1',2,2'-tetrahydroneurosporene and 1,1'-dihydroxy-1,1',2,2'-tetrahydrolycopene. Probably involved in the synthesis of myxol, a gamma-carotene derivative. May use FAD as a proton acceptor. The sequence is that of 1-hydroxycarotenoid 3,4-desaturase from Nonlabens dokdonensis (strain DSM 17205 / KCTC 12402 / DSW-6) (Donghaeana dokdonensis).